A 2228-amino-acid polypeptide reads, in one-letter code: Genome polyprotein (2228 aa).

The interval 56 to 76 is disordered; it reads AEVGAHQSEPLKTSVDKPGSK. 2 short sequence motifs ((L)YPX(n)L motif) span residues 167–171 and 200–205; these read YPHGL and YPVWEL. The segment at 766–836 is involved in P1-2A pentamerization; the sequence is MLDRIALGDL…PRKIKGVFSQ (71 aa). Residues 1011–1031 traverse the membrane as a helical segment; that stretch reads TVEIINTVLCFVKSGILLYVI. Residues 1043–1070 are membrane-penetrating ability; it reads IGLLRVMNYADIGCSVISCGKVFSKMLE. Positions 1127–1152 form a coiled coil; sequence NKKDVLNILKDNQQKIERAIEEADNF. The 163-residue stretch at 1204–1366 folds into the SF3 helicase domain; sequence HQKLKNLGSI…SFFKNPHNDM (163 aa). 1230 to 1237 provides a ligand contact to ATP; the sequence is GKRGGGKS. The helical transmembrane segment at 1462–1482 threads the bilayer; that stretch reads WVAVGAAVGVLGVLVGGWYVY. The residue at position 1499 (tyrosine 1499) is an O-(5'-phospho-RNA)-tyrosine. One can recognise a Peptidase C3 domain in the interval 1514–1728; the sequence is DPVESQSTLE…VAKLVTQEMF (215 aa). Catalysis depends on for protease 3C activity residues histidine 1563, aspartate 1603, and cysteine 1691. Positions 1977 to 2098 constitute a RdRp catalytic domain; sequence DVGLDLDFSA…VFSRQVQFDN (122 aa).

It belongs to the picornaviridae polyprotein family. Homodimer. Homomultimer; probably interacts with membranes in a multimeric form. Seems to assemble into amyloid-like fibers. As to quaternary structure, homodimer. Monomer. Interacts with protein 3CD. In terms of assembly, interacts with host ACBD3. Interacts with protein 3AB. As to quaternary structure, interacts with human MAVS. In terms of assembly, homodimer; disulfide-linked. Homopentamer. Homooligomer. As to quaternary structure, interacts with capsid protein VP2. Interacts with capsid protein VP3. In terms of assembly, interacts with capsid protein VP1. Interacts with capsid protein VP3. Interacts with capsid protein VP1. Interacts with capsid protein VP2. Specific enzymatic cleavages by viral protease in vivo yield a variety of precursors and mature proteins. Polyprotein processing intermediates are produced, such as P1-2A which is a functional precursor of the structural proteins, VP0 which is a VP4-VP2 precursor, VP1-2A precursor, 3ABC precursor which is a stable and catalytically active precursor of 3A, 3B and 3C proteins, 3AB and 3CD precursors. The assembly signal 2A is removed from VP1-2A by a host protease, possibly host Cathepsin L. This cleavage occurs over a region of 3 amino-acids probably generating VP1 proteins with heterogeneous C-termini. Post-translationally, during virion maturation, immature virions are rendered infectious following cleavage of VP0 into VP4 and VP2. This maturation seems to be an autocatalytic event triggered by the presence of RNA in the capsid and is followed by a conformational change of the particle. In terms of processing, the assembly signal 2A is removed from VP1-2A by a host protease, possibly host Cathepsin L in naked virions. This cleavage does not occur in enveloped virions. This cleavage occurs over a region of 3 amino-acids probably generating VP1 proteins with heterogeneous C-termini. VPg is uridylylated prior to priming replication into VPg-pUpU. Post-translationally, unlike other picornaviruses, does not seem to be myristoylated.

Its subcellular location is the virion. It localises to the host endosome. The protein localises to the host multivesicular body. It is found in the host membrane. The protein resides in the host mitochondrion outer membrane. Its subcellular location is the host cytoplasm. It localises to the host cytoplasmic vesicle membrane. The catalysed reaction is RNA(n) + a ribonucleoside 5'-triphosphate = RNA(n+1) + diphosphate. It catalyses the reaction a ribonucleoside 5'-triphosphate + H2O = a ribonucleoside 5'-diphosphate + phosphate + H(+). It carries out the reaction Selective cleavage of Gln-|-Gly bond in the poliovirus polyprotein. In other picornavirus reactions Glu may be substituted for Gln, and Ser or Thr for Gly.. Its function is as follows. Capsid proteins VP1, VP2, and VP3 form a closed capsid enclosing the viral positive strand RNA genome. All these proteins contain a beta-sheet structure called beta-barrel jelly roll. Together they form an icosahedral capsid (T=3) composed of 60 copies of each VP1, VP2, and VP3, with a diameter of approximately 300 Angstroms. VP1 is situated at the 12 fivefold axes, whereas VP2 and VP3 are located at the quasi-sixfold axes. The naked capsid interacts with the host receptor HAVCR1 to provide virion attachment to and probably entry into the target cell. Functionally, VP0 precursor is a component of the immature procapsids. Plays a role in the assembly of the 12 pentamers into an icosahedral structure. Has not been detected in mature virions, supposedly owing to its small size. In terms of biological role, precursor component of immature procapsids that corresponds to an extended form of the structural protein VP1. After maturation, possibly by the host Cathepsin L, the assembly signal 2A is cleaved to give rise to the mature VP1 protein. Its function is as follows. Functions as a viroporin. Affects membrane integrity and causes an increase in membrane permeability. Involved in host intracellular membrane rearrangements probably to give rise to the viral factories. Does not disrupt calcium homeostasis or glycoprotein trafficking. Antagonizes the innate immune response of the host by suppressing IFN-beta synthesis, which it achieves by interfering with the RIG-I/IFIH1 pathway. Functionally, affects membrane integrity and causes an increase in membrane permeability. Associates with and induces structural rearrangements of intracellular membranes. Displays RNA-binding activity. In terms of biological role, the precursor 3ABC is targeted to the mitochondrial membrane where protease 3C activity cleaves and inhibits the host antiviral protein MAVS, thereby disrupting activation of IRF3 through the IFIH1/MDA5 pathway. In vivo, the protease activity of 3ABC precursor is more efficient in cleaving the 2BC precursor than that of protein 3C. The 3ABC precursor may therefore play a role in the proteolytic processing of the polyprotein. Possible viroporin. Its function is as follows. Interacts with the 3CD precursor and with RNA structures found at both the 5'- and 3'-termini of the viral genome. Since the 3AB precursor contains the hydrophobic domain 3A, it probably anchors the whole viral replicase complex to intracellular membranes on which viral RNA synthesis occurs. Functionally, may serve as membrane anchor to the 3AB and 3ABC precursors via its hydrophobic domain. May interact with RNA. Acts as a primer for viral RNA replication and remains covalently bound to viral genomic RNA. VPg is uridylylated prior to priming replication into VPg-pUpU. The VPg-pUpU is then used as primer on the genomic RNA poly(A) by the RNA-dependent RNA polymerase to replicate the viral genome. In terms of biological role, cysteine protease that generates mature viral proteins from the precursor polyprotein. In addition to its proteolytic activity, it binds to viral RNA, and thus influences viral genome replication. RNA and substrate bind cooperatively to the protease. Cleaves IKBKG/NEMO to impair innate immune signaling. Cleaves host PABPC1 which may participate in the switch of viral translation to RNA synthesis. Its function is as follows. Interacts with the 3AB precursor and with RNA structures found at both the 5'- and 3'-termini of the viral genome. Disrupts TLR3 signaling by degrading the host adapter protein TICAM1/TRIF. Functionally, RNA-directed RNA polymerase 3D-POL replicates genomic and antigenomic RNA by recognizing replications specific signals. This Cercopithecus hamlyni (Owl-faced monkey) protein is Genome polyprotein.